We begin with the raw amino-acid sequence, 95 residues long: Large ribosomal subunit protein bL25 (95 aa).

This sequence belongs to the bacterial ribosomal protein bL25 family. As to quaternary structure, part of the 50S ribosomal subunit; part of the 5S rRNA/L5/L18/L25 subcomplex. Contacts the 5S rRNA. Binds to the 5S rRNA independently of L5 and L18.

In terms of biological role, this is one of the proteins that binds to the 5S RNA in the ribosome where it forms part of the central protuberance. The chain is Large ribosomal subunit protein bL25 from Glaesserella parasuis serovar 5 (strain SH0165) (Haemophilus parasuis).